A 105-amino-acid chain; its full sequence is Met repressor (105 aa).

Belongs to the MetJ family. Homodimer.

Its subcellular location is the cytoplasm. Its function is as follows. This regulatory protein, when combined with SAM (S-adenosylmethionine) represses the expression of the methionine regulon and of enzymes involved in SAM synthesis. The sequence is that of Met repressor from Glaesserella parasuis serovar 5 (strain SH0165) (Haemophilus parasuis).